The primary structure comprises 287 residues: MTSAQKPVFSPSDLQTWLEIATEAVLAAGAEIFSLWGKVQQIQEKGRAGDLVTEADRQAEAIILEIIKRRCPDHAILAEESGQLGQVDNPFCWAIDPLDGTTNFAHSYPVSCVSIGLLIQDIPTVGVVYNPFRQELFRAATSLGATLNRRPIQVSTTASLDKSLLVTGFAYDRVKTLDNNYPEFCYLTHLTQGVRRSGSAAIDLIDVACGRLDGYWERGINPWDMAAGIVIVREAGGIVSAYDCSPLDLSTGRILATNGKIHQELSQALAATPQWFQQYAAARAQKI.

The Mg(2+) site is built by glutamate 79, aspartate 96, leucine 98, and aspartate 99. Glutamate 79 serves as a coordination point for substrate. Residues 98-101 (LDGT), arginine 195, and aspartate 224 contribute to the substrate site. Aspartate 224 is a binding site for Mg(2+).

This sequence belongs to the inositol monophosphatase superfamily. Mg(2+) serves as cofactor.

It catalyses the reaction a myo-inositol phosphate + H2O = myo-inositol + phosphate. This chain is Inositol-1-monophosphatase (suhB), found in Synechocystis sp. (strain ATCC 27184 / PCC 6803 / Kazusa).